Consider the following 89-residue polypeptide: MANHKSAEKRIRQTIKRTERNRFYKTKIKNIIKAVREAVAVNDVEKAQERLKIANKELHKFVSKGILKKNTASRKVSRLNASVKKIALA.

The protein belongs to the bacterial ribosomal protein bS20 family.

In terms of biological role, binds directly to 16S ribosomal RNA. The chain is Small ribosomal subunit protein bS20 from Helicobacter acinonychis (strain Sheeba).